Here is a 270-residue protein sequence, read N- to C-terminus: tRNA pseudouridine synthase A (270 aa).

Catalysis depends on Asp-51, which acts as the Nucleophile. Position 109 (Tyr-109) interacts with substrate.

Belongs to the tRNA pseudouridine synthase TruA family. As to quaternary structure, homodimer.

The enzyme catalyses uridine(38/39/40) in tRNA = pseudouridine(38/39/40) in tRNA. Its function is as follows. Formation of pseudouridine at positions 38, 39 and 40 in the anticodon stem and loop of transfer RNAs. The sequence is that of tRNA pseudouridine synthase A from Burkholderia vietnamiensis (strain G4 / LMG 22486) (Burkholderia cepacia (strain R1808)).